The primary structure comprises 324 residues: Phosphate transport system permease protein PstC 2 (324 aa).

6 consecutive transmembrane segments (helical) span residues A30–V50, L90–L110, M125–L145, A174–V194, V237–I257, and P290–V310. The 230-residue stretch at F85–A314 folds into the ABC transmembrane type-1 domain.

This sequence belongs to the binding-protein-dependent transport system permease family. CysTW subfamily.

The protein resides in the cell membrane. In terms of biological role, part of the binding-protein-dependent transport system for phosphate; probably responsible for the translocation of the substrate across the membrane. This chain is Phosphate transport system permease protein PstC 2 (pstC2), found in Mycobacterium bovis (strain ATCC BAA-935 / AF2122/97).